An 845-amino-acid chain; its full sequence is Leucine--tRNA ligase (845 aa).

The 'HIGH' region motif lies at P40–H51. The 'KMSKS' region signature appears at K623 to S627. K626 provides a ligand contact to ATP.

Belongs to the class-I aminoacyl-tRNA synthetase family.

The protein resides in the cytoplasm. The enzyme catalyses tRNA(Leu) + L-leucine + ATP = L-leucyl-tRNA(Leu) + AMP + diphosphate. This chain is Leucine--tRNA ligase, found in Protochlamydia amoebophila (strain UWE25).